A 1086-amino-acid polypeptide reads, in one-letter code: MLRTSCTSSLRRVVGKYVVSPLVASQIRFATSSVRSQPYLLNSELTELPAQFKRYSSILLTEKPEGDVPESGPEPSGESGISEKSNVENDKHDGNDEIKPEAEKNEKDEIEKPEIDKDAIVETDGVSESSVENVSGSSSAAGGASAPPSGNSNNNNNNNNNNNDNDEPNEIVTNAGTGLYPPLLAIPMKDRPPLPGRPFAINITDPEVIRSIYTIIDKREPYFVLFHVKDPNEGDTDVINSKDSVYNIGVHCQIIRHTTPRPGVFNVLGYPLERCSLADLSTPSEKKGETETRKEGENFPTSYLKGLKVSYATVKPVKDEPFDKTSTDIKSLVESLKALLSKMGAKNPLEKLQIKEGTELVNDPPRFADFVGSTIHGDPKKIQEILESLNIQTRLSKALELLKVELKASLIKENTIHNLSTKADEYQTRLFIKEFIKELQKRAGIVESDDKKTSKFDERLKHLKMTEEALEAYNAEKAKMESQNEHSSELGVSERYLDWLTSIPWGIYSKDRFNIKQAREILDRDHYGLKDVKDRILEFISMGRVSGKVDGKILCLTGPPGTGKTSIAKSIAESLNRKYVRIAMGGIQDVHEVKGHRRTYVGSIPGRIISALKQAKTSNPLMLIDEIDKLDLSRSGGASSAFLEILDPEQNNAFVDNYIDVKVDLSKVLFVCTANYLGNISPPLRDRMEIIEVNGYTNNEKIEIAKRHLIPDAAKKAGLEGGHVVIETKTISRLIEKYCRESGLRNIKKLITRIFSKASLKIVEEVEAREGESKSKSEEAKSEAITGSVTEISVEDATVKAQSIEEPSVESASQKVDEAKPVESEELKSDEEEEEVVKLEIPDDIKLEITSANLKDYVGPEIYTRDRVYDIPPPGVATGLSYSTSGNGDALYIESILTHSIGSGSGHASIHVTGSLKDVMKESASIAYSFAKSYMVKNYPENRFFEAAEIHVHCPDGAIPKDGPSAGISFTSSLISLALQKPLPPTIAMTGEITVTGRVLAVGGLREKILGAKRYGCNTIIFPKDIENELEEIPEEVKEGVKFIPVEWYQDVFDEIFPNLSSDEGNEVWKEEFNKLDKKKASNKKK.

The N-terminal 55 residues, 1–55 (MLRTSCTSSLRRVVGKYVVSPLVASQIRFATSSVRSQPYLLNSELTELPAQFKRY), are a transit peptide targeting the mitochondrion. The tract at residues 61–176 (TEKPEGDVPE…EPNEIVTNAG (116 aa)) is disordered. Positions 69–83 (PESGPEPSGESGISE) are enriched in low complexity. Residues 85–120 (SNVENDKHDGNDEIKPEAEKNEKDEIEKPEIDKDAI) are compositionally biased toward basic and acidic residues. Over residues 124–163 (DGVSESSVENVSGSSSAAGGASAPPSGNSNNNNNNNNNNN) the composition is skewed to low complexity. In terms of domain architecture, Lon N-terminal spans 183 to 406 (LLAIPMKDRP…KALELLKVEL (224 aa)). An ATP-binding site is contributed by 558 to 565 (GPPGTGKT). 2 stretches are compositionally biased toward basic and acidic residues: residues 767–782 (EARE…EAKS) and 815–827 (KVDE…SEEL). Disordered stretches follow at residues 767–788 (EARE…ITGS) and 800–835 (KAQS…EEEE). The Lon proteolytic domain occupies 871–1059 (IPPPGVATGL…QDVFDEIFPN (189 aa)). Catalysis depends on residues Ser-965 and Lys-1008.

The protein belongs to the peptidase S16 family. In terms of assembly, homohexamer or homoheptamer. Organized in a ring with a central cavity.

The protein resides in the mitochondrion matrix. The catalysed reaction is Hydrolysis of proteins in presence of ATP.. ATP-dependent serine protease that mediates the selective degradation of misfolded, unassembled or oxidatively damaged polypeptides as well as certain short-lived regulatory proteins in the mitochondrial matrix. May also have a chaperone function in the assembly of inner membrane protein complexes. Participates in the regulation of mitochondrial gene expression and in the maintenance of the integrity of the mitochondrial genome. Binds to mitochondrial DNA in a site-specific manner. The chain is Lon protease homolog, mitochondrial from Scheffersomyces stipitis (strain ATCC 58785 / CBS 6054 / NBRC 10063 / NRRL Y-11545) (Yeast).